The primary structure comprises 225 residues: Uracil phosphoribosyltransferase (225 aa).

36–40 (KGLVR) is a GTP binding site. 5-phospho-alpha-D-ribose 1-diphosphate is bound by residues arginine 86, arginine 111, and 145–153 (DPMLATGST). Residues isoleucine 210 and 215–217 (GDA) each bind uracil. Aspartate 216 contributes to the 5-phospho-alpha-D-ribose 1-diphosphate binding site.

The protein belongs to the UPRTase family. Mg(2+) serves as cofactor.

It carries out the reaction UMP + diphosphate = 5-phospho-alpha-D-ribose 1-diphosphate + uracil. It functions in the pathway pyrimidine metabolism; UMP biosynthesis via salvage pathway; UMP from uracil: step 1/1. Its activity is regulated as follows. Allosterically activated by GTP. In terms of biological role, catalyzes the conversion of uracil and 5-phospho-alpha-D-ribose 1-diphosphate (PRPP) to UMP and diphosphate. This Haloarcula marismortui (strain ATCC 43049 / DSM 3752 / JCM 8966 / VKM B-1809) (Halobacterium marismortui) protein is Uracil phosphoribosyltransferase.